Reading from the N-terminus, the 138-residue chain is High mobility group B protein 4 (138 aa).

Disordered regions lie at residues 1–41 (MKGG…PPSA) and 105–138 (LKLA…EDDD). Positions 18-29 (KTRGRKAGKKTK) are enriched in basic residues. A DNA-binding region (HMG box) is located at residues 35–104 (PKRPPSAFFV…EYIKNVQQYN (70 aa)). Phosphoserine occurs at positions 123 and 130. Residues 126-138 (DEAVSEEEAEDDD) are compositionally biased toward acidic residues.

It belongs to the HMGB family. In terms of tissue distribution, mostly expressed roots and flowers, and, to a lower extent, in stems and leaves.

It localises to the nucleus. Its subcellular location is the cytoplasm. The protein localises to the cytosol. Binds preferentially double-stranded DNA. This is High mobility group B protein 4 (HMGB4) from Arabidopsis thaliana (Mouse-ear cress).